The primary structure comprises 1116 residues: Protein translocase subunit SecA (1116 aa).

ATP-binding positions include glutamine 176, glycine 194–threonine 198, and aspartate 693.

The protein belongs to the SecA family. Monomer and homodimer. Part of the essential Sec protein translocation apparatus which comprises SecA, SecYEG and auxiliary proteins SecDF. Other proteins may also be involved.

It localises to the cell inner membrane. It is found in the cytoplasm. It carries out the reaction ATP + H2O + cellular proteinSide 1 = ADP + phosphate + cellular proteinSide 2.. Functionally, part of the Sec protein translocase complex. Interacts with the SecYEG preprotein conducting channel. Has a central role in coupling the hydrolysis of ATP to the transfer of proteins into and across the cell membrane, serving as an ATP-driven molecular motor driving the stepwise translocation of polypeptide chains across the membrane. The polypeptide is Protein translocase subunit SecA (Amoebophilus asiaticus (strain 5a2)).